The sequence spans 259 residues: Type III pantothenate kinase (259 aa).

Position 6 to 13 (6 to 13) interacts with ATP; that stretch reads DVGNTNIV. Residues Tyr-100 and 107–110 each bind substrate; that span reads GADR. Asp-109 (proton acceptor) is an active-site residue. Asp-129 is a K(+) binding site. Residue Thr-132 coordinates ATP. Position 184 (Thr-184) interacts with substrate.

Belongs to the type III pantothenate kinase family. Homodimer. NH4(+) is required as a cofactor. K(+) serves as cofactor.

It is found in the cytoplasm. It catalyses the reaction (R)-pantothenate + ATP = (R)-4'-phosphopantothenate + ADP + H(+). Its pathway is cofactor biosynthesis; coenzyme A biosynthesis; CoA from (R)-pantothenate: step 1/5. Functionally, catalyzes the phosphorylation of pantothenate (Pan), the first step in CoA biosynthesis. The protein is Type III pantothenate kinase of Clostridium kluyveri (strain NBRC 12016).